The sequence spans 380 residues: Heme A synthase (380 aa).

8 helical membrane passes run 36–56 (IRAW…VGGL), 125–145 (VIGL…KIPA), 151–171 (LILP…MVAS), 187–207 (LATH…SILQ), 227–247 (FGLA…GALV), 287–307 (LVQF…VMVW), 320–340 (FAFN…IVTV), and 344–364 (APWQ…VLIL). His-292 contacts heme. His-352 serves as a coordination point for heme.

Belongs to the COX15/CtaA family. Type 2 subfamily. As to quaternary structure, interacts with CtaB. Heme b serves as cofactor.

It is found in the cell membrane. It catalyses the reaction Fe(II)-heme o + 2 A + H2O = Fe(II)-heme a + 2 AH2. It participates in porphyrin-containing compound metabolism; heme A biosynthesis; heme A from heme O: step 1/1. Functionally, catalyzes the conversion of heme O to heme A by two successive hydroxylations of the methyl group at C8. The first hydroxylation forms heme I, the second hydroxylation results in an unstable dihydroxymethyl group, which spontaneously dehydrates, resulting in the formyl group of heme A. The polypeptide is Heme A synthase (Ruegeria pomeroyi (strain ATCC 700808 / DSM 15171 / DSS-3) (Silicibacter pomeroyi)).